Reading from the N-terminus, the 218-residue chain is Glutathione S-transferase Mu 2 (218 aa).

The GST N-terminal domain occupies 2–88 (PMTLGYWDIR…YLGRKHNLCG (87 aa)). 7–8 (YW) is a glutathione binding site. Ser-27 and Ser-44 each carry phosphoserine. Residues 43–46 (RSQW), Lys-50, 59–60 (NL), and 72–73 (QS) contribute to the glutathione site. One can recognise a GST C-terminal domain in the interval 90–214 (TEEERIRVDV…SKPIFAKMAF (125 aa)). Tyr-116 contributes to the substrate binding site. Ser-117 is modified (phosphoserine).

The protein belongs to the GST superfamily. Mu family. As to quaternary structure, homodimer or heterodimer.

Its subcellular location is the cytoplasm. The enzyme catalyses RX + glutathione = an S-substituted glutathione + a halide anion + H(+). It carries out the reaction 11(S)-hydroxy-14(S),15(S)-epoxy-(5Z,8Z,12E)-eicosatrienoate + glutathione = (11S,15S)-dihydroxy-14(R)-S-glutathionyl-(5Z,8Z,12E)-eicosatrienoate. In terms of biological role, conjugation of reduced glutathione to a wide number of exogenous and endogenous hydrophobic electrophiles. Participates in the formation of novel hepoxilin regioisomers. The polypeptide is Glutathione S-transferase Mu 2 (Rattus norvegicus (Rat)).